The primary structure comprises 594 residues: Protein FAM200C (594 aa).

This chain is Protein FAM200C, found in Homo sapiens (Human).